The sequence spans 409 residues: Shaggy-related protein kinase NtK-1 (409 aa).

The segment at methionine 1–glutamate 27 is disordered. The region spanning tyrosine 73–phenylalanine 357 is the Protein kinase domain. Residues valine 79–valine 87 and lysine 102 each bind ATP. Aspartate 198 acts as the Proton acceptor in catalysis.

This sequence belongs to the protein kinase superfamily. CMGC Ser/Thr protein kinase family. GSK-3 subfamily. Autophosphorylated mainly on threonine and serine residues.

The catalysed reaction is L-seryl-[protein] + ATP = O-phospho-L-seryl-[protein] + ADP + H(+). It carries out the reaction L-threonyl-[protein] + ATP = O-phospho-L-threonyl-[protein] + ADP + H(+). Its function is as follows. May mediate extracellular signals to regulate transcription in differentiating cells. In Nicotiana tabacum (Common tobacco), this protein is Shaggy-related protein kinase NtK-1 (NTK-1).